A 283-amino-acid chain; its full sequence is Ribosome biogenesis GTPase A (283 aa).

Residues 14-178 form the CP-type G domain; it reads RREVTEKLKL…LLDTPGILWP (165 aa). Residues 58-61, 86-87, 130-135, and Gly174 contribute to the GTP site; these read NKAD, NS, and NVGKST.

The protein belongs to the TRAFAC class YlqF/YawG GTPase family. MTG1 subfamily. In terms of assembly, interacts with ctc. Interacts with the immature 50S ribosome subunit. 2 molecules of rbgA bind to one 50S subunit.

The protein resides in the cytoplasm. Functionally, essential protein that is required for a late step of 50S ribosomal subunit assembly. Has GTPase activity that is stimulated by interaction with the immature 50S ribosome subunit. Binds to the 23S rRNA. Required for the association of ribosomal proteins rplP and rpmA with the large subunit. This is Ribosome biogenesis GTPase A from Bacillus licheniformis (strain ATCC 14580 / DSM 13 / JCM 2505 / CCUG 7422 / NBRC 12200 / NCIMB 9375 / NCTC 10341 / NRRL NRS-1264 / Gibson 46).